The sequence spans 485 residues: uncharacterized protein (485 aa).

The tract at residues 151-201 is disordered; it reads IKAPTNNSQSGDGNGGTNNDNLLGTFDIREKSNGKKGESNGKQGNGQDKKT. Over residues 155 to 174 the composition is skewed to low complexity; sequence TNNSQSGDGNGGTNNDNLLG. Over residues 177–189 the composition is skewed to basic and acidic residues; that stretch reads DIREKSNGKKGES.

This sequence belongs to the MG185/MG260 family.

This is an uncharacterized protein from Mycoplasma pneumoniae (strain ATCC 29342 / M129 / Subtype 1) (Mycoplasmoides pneumoniae).